A 942-amino-acid chain; its full sequence is E3 ubiquitin-protein ligase HACE1 (942 aa).

ANK repeat units follow at residues 23–55, 64–93, 97–126, 130–159, 163–192, 196–226, and 228–253; these read LPDD…NSKF, VKRS…NPNY, SGCT…DVNI, EGLT…NVDV, MGQT…DINR, SGAT…YLPD, and NGIT…QYHP. Residues 428-459 form a disordered region; the sequence is KGPDHQDATPTPSFAAAGTESRKELSTDTGDS. Residues 447 to 459 are compositionally biased toward basic and acidic residues; the sequence is ESRKELSTDTGDS. Residues 607–942 enclose the HECT domain; it reads NCAKLKQGIA…HCGSYGYTMA (336 aa). The active-site Glycyl thioester intermediate is Cys909.

It localises to the golgi apparatus. Its subcellular location is the golgi stack membrane. It is found in the cytoplasm. The protein localises to the endoplasmic reticulum. The catalysed reaction is S-ubiquitinyl-[E2 ubiquitin-conjugating enzyme]-L-cysteine + [acceptor protein]-L-lysine = [E2 ubiquitin-conjugating enzyme]-L-cysteine + N(6)-ubiquitinyl-[acceptor protein]-L-lysine.. The protein operates within protein modification; protein ubiquitination. Functionally, E3 ubiquitin-protein ligase involved in Golgi membrane fusion and regulation of small GTPases. Acts as a regulator of Golgi membrane dynamics during the cell cycle: recruited to Golgi membrane by Rab proteins and regulates postmitotic Golgi membrane fusion. Acts by mediating ubiquitination during mitotic Golgi disassembly, ubiquitination serving as a signal for Golgi reassembly later, after cell division. This Gallus gallus (Chicken) protein is E3 ubiquitin-protein ligase HACE1 (HACE1).